A 311-amino-acid chain; its full sequence is ATP synthase gamma chain (311 aa).

The cysteines at positions 67 and 138 are disulfide-linked.

This sequence belongs to the ATPase gamma chain family. F-type ATPases have 2 components, CF(1) - the catalytic core - and CF(0) - the membrane proton channel. CF(1) has five subunits: alpha(3), beta(3), gamma(1), delta(1), epsilon(1). CF(0) has three main subunits: a, b and c.

The protein resides in the cellular thylakoid membrane. Thiol-modulation by raising the activation threshold of the enzyme upon oxidation of the cysteines, thereby preventing wasteful ATP-hydrolysis. Produces ATP from ADP in the presence of a proton gradient across the membrane. The gamma chain is believed to be important in regulating ATPase activity and the flow of protons through the CF(0) complex. The chain is ATP synthase gamma chain (atpG) from Arthrospira platensis (Spirulina platensis).